A 397-amino-acid polypeptide reads, in one-letter code: Digeranylgeranylglycerophospholipid reductase 1 (397 aa).

FAD-binding residues include A18, D37, C48, A49, G51, R104, A128, D284, G296, and I297.

It belongs to the geranylgeranyl reductase family. DGGGPL reductase subfamily. It depends on FAD as a cofactor.

It catalyses the reaction a 2,3-bis-O-phytanyl-sn-glycerol 1-phospholipid + 8 A = a 2,3-bis-O-(geranylgeranyl)-sn-glycerol 1-phospholipid + 8 AH2. The enzyme catalyses 2,3-bis-O-(phytanyl)-sn-glycerol 1-phosphate + 8 A = 2,3-bis-O-(geranylgeranyl)-sn-glycerol 1-phosphate + 8 AH2. It carries out the reaction CDP-2,3-bis-O-(geranylgeranyl)-sn-glycerol + 8 AH2 = CDP-2,3-bis-O-(phytanyl)-sn-glycerol + 8 A. The catalysed reaction is archaetidylserine + 8 AH2 = 2,3-bis-O-phytanyl-sn-glycero-3-phospho-L-serine + 8 A. It functions in the pathway membrane lipid metabolism; glycerophospholipid metabolism. Is involved in the reduction of 2,3-digeranylgeranylglycerophospholipids (unsaturated archaeols) into 2,3-diphytanylglycerophospholipids (saturated archaeols) in the biosynthesis of archaeal membrane lipids. Catalyzes the formation of archaetidic acid (2,3-di-O-phytanyl-sn-glyceryl phosphate) from 2,3-di-O-geranylgeranylglyceryl phosphate (DGGGP) via the hydrogenation of each double bond of the isoprenoid chains. Is also probably able to reduce double bonds of geranyl groups in CDP-2,3-bis-O-(geranylgeranyl)-sn-glycerol and archaetidylserine, thus acting at various stages in the biosynthesis of archaeal membrane lipids. The polypeptide is Digeranylgeranylglycerophospholipid reductase 1 (Methanothermobacter thermautotrophicus (strain ATCC 29096 / DSM 1053 / JCM 10044 / NBRC 100330 / Delta H) (Methanobacterium thermoautotrophicum)).